Here is a 361-residue protein sequence, read N- to C-terminus: Phenylalanine--tRNA ligase alpha subunit (361 aa).

Glutamate 260 serves as a coordination point for Mg(2+).

Belongs to the class-II aminoacyl-tRNA synthetase family. Phe-tRNA synthetase alpha subunit type 1 subfamily. In terms of assembly, tetramer of two alpha and two beta subunits. Requires Mg(2+) as cofactor.

The protein resides in the cytoplasm. The enzyme catalyses tRNA(Phe) + L-phenylalanine + ATP = L-phenylalanyl-tRNA(Phe) + AMP + diphosphate + H(+). The polypeptide is Phenylalanine--tRNA ligase alpha subunit (Chelativorans sp. (strain BNC1)).